The sequence spans 118 residues: Ribonuclease P protein component (118 aa).

It belongs to the RnpA family. As to quaternary structure, consists of a catalytic RNA component (M1 or rnpB) and a protein subunit.

It carries out the reaction Endonucleolytic cleavage of RNA, removing 5'-extranucleotides from tRNA precursor.. In terms of biological role, RNaseP catalyzes the removal of the 5'-leader sequence from pre-tRNA to produce the mature 5'-terminus. It can also cleave other RNA substrates such as 4.5S RNA. The protein component plays an auxiliary but essential role in vivo by binding to the 5'-leader sequence and broadening the substrate specificity of the ribozyme. The sequence is that of Ribonuclease P protein component from Shewanella baltica (strain OS155 / ATCC BAA-1091).